The sequence spans 223 residues: MRVKEMNESLRPREKMKINGISSMSDEELMQIILKTGIKEEGVEILSKRVIDYINENDYKDLCVEELMKIKGIGMAKATSILAGIEIGRRLSLRKAMDSFSLNDPDSVAEIFCNEIGSCDVENFYALLLDTKNRIISKELISKGTINQSIVHPREVFKSAIKKGANSIILVHNHPSGSLIPSNADIEVTKRLDKVGDLVGIQVLDHIIVSSNDSLSMRKGMYF.

In terms of domain architecture, MPN spans 101–223; the sequence is SLNDPDSVAE…SLSMRKGMYF (123 aa). 3 residues coordinate Zn(2+): H172, H174, and D185. The JAMM motif motif lies at 172-185; it reads HNHPSGSLIPSNAD.

Belongs to the UPF0758 family.

This is UPF0758 protein FMG_0357 from Finegoldia magna (strain ATCC 29328 / DSM 20472 / WAL 2508) (Peptostreptococcus magnus).